Here is a 462-residue protein sequence, read N- to C-terminus: Sugar transporter ERD6-like 2 (462 aa).

12 consecutive transmembrane segments (helical) span residues 23–43 (SGLL…GCAM), 70–90 (VMTL…ALVG), 96–116 (WISD…HDII), 123–143 (LFLG…IAEI), 156–176 (NQLL…FFHW), 178–198 (TLAL…FFIP), 261–281 (LIIG…AISA), 296–316 (IGTT…MLTV), 324–344 (LLMI…LSYY), 357–377 (VMLI…LGGL), 397–417 (LVTM…NFMI), and 423–443 (GTYF…WTLV).

Belongs to the major facilitator superfamily. Sugar transporter (TC 2.A.1.1) family.

It localises to the membrane. Its function is as follows. Sugar transporter. This is Sugar transporter ERD6-like 2 (SUGTL3) from Arabidopsis thaliana (Mouse-ear cress).